We begin with the raw amino-acid sequence, 32 residues long: Calcitonin-2 (32 aa).

Cys-1 and Cys-7 are oxidised to a cystine. Pro-32 bears the Proline amide mark.

The protein belongs to the calcitonin family.

It is found in the secreted. Its function is as follows. Causes a rapid but short-lived drop in the level of calcium and phosphate in blood by promoting the incorporation of those ions in the bones. The polypeptide is Calcitonin-2 (Oncorhynchus gorbuscha (Pink salmon)).